We begin with the raw amino-acid sequence, 103 residues long: Large ribosomal subunit protein mL41 (103 aa).

The protein belongs to the mitochondrion-specific ribosomal protein mL41 family. In terms of assembly, component of the mitochondrial large ribosomal subunit (mt-LSU). Mature N.crassa 74S mitochondrial ribosomes consist of a small (37S) and a large (54S) subunit. The 37S small subunit contains a 16S ribosomal RNA (16S mt-rRNA) and 32 different proteins. The 54S large subunit contains a 23S rRNA (23S mt-rRNA) and 42 different proteins.

It is found in the mitochondrion. In terms of biological role, component of the mitochondrial ribosome (mitoribosome), a dedicated translation machinery responsible for the synthesis of mitochondrial genome-encoded proteins, including at least some of the essential transmembrane subunits of the mitochondrial respiratory chain. The mitoribosomes are attached to the mitochondrial inner membrane and translation products are cotranslationally integrated into the membrane. The sequence is that of Large ribosomal subunit protein mL41 (mrpl27) from Neurospora crassa (strain ATCC 24698 / 74-OR23-1A / CBS 708.71 / DSM 1257 / FGSC 987).